A 262-amino-acid chain; its full sequence is Small ribosomal subunit protein eS4x (262 aa).

The 63-residue stretch at 42-104 folds into the S4 RNA-binding domain; the sequence is LPLVLIIRNR…TNENFRLLYD (63 aa).

This sequence belongs to the eukaryotic ribosomal protein eS4 family.

The protein resides in the cytoplasm. The sequence is that of Small ribosomal subunit protein eS4x (RPS4D) from Arabidopsis thaliana (Mouse-ear cress).